Consider the following 118-residue polypeptide: Large ribosomal subunit protein bL20 (118 aa).

The protein belongs to the bacterial ribosomal protein bL20 family.

Functionally, binds directly to 23S ribosomal RNA and is necessary for the in vitro assembly process of the 50S ribosomal subunit. It is not involved in the protein synthesizing functions of that subunit. The protein is Large ribosomal subunit protein bL20 of Sulfurovum sp. (strain NBC37-1).